A 308-amino-acid polypeptide reads, in one-letter code: Testis-specific Y-encoded protein 3 (308 aa).

It belongs to the nucleosome assembly protein (NAP) family.

It is found in the cytoplasm. The protein localises to the nucleus. May be involved in sperm differentiation and proliferation. In Homo sapiens (Human), this protein is Testis-specific Y-encoded protein 3 (TSPY3).